The sequence spans 1132 residues: MDMTSCVARRTRSRTESYLNSILNKSKGISGEEEDQSLGCVNSRTEKRRVNMRDACSPSPRKKKRRRRKDDDDDVVFVRTEYPEGKRDDENVGSTSGNLQSKSFDFGDRVCDFDADDRNLGCEEKASNFNPIDDDDDVVFVGTVQRENDHVEDDDNVGSASVISPRVCDFDEDDAKVSGKENPLSPDDDDDVVFLGTIAGENQHVEDVNAGSEVCDILLDDANLRGEEKTYVSDEVVSLSSSSDDEEDPLEELGTDSREEVSGEDRDSGESDMDEDANDSDSSDYVGESSDSSDVESSDSDFVCSEDEEGGTRDDATCEKNPSEKVYHHKKSRTFRRKHNFDVINLLAKSMLESKDVFKEDIFSWDKIAEVDSREDPVVRESSSEKVNEHGKPRERRSFHRVREKNHLNGESFYGGEKLCDGEETINYSTEDSPPLNLRFGCEEPVLIEKTEEEKELDSLWEDMNVALTLEGMHSSTPDKNGDMLCSKGTHDFVLDDEIGLKCVHCAYVAVEIKDISPAMDKYRPSVNDNKKCSDRKGDPLPNRLEFDASDPSSFVAPLDNIEGTVWQYVPGIKDTLYPHQQEGFEFIWKNLAGTTKINELNSVGVKGSGGCIISHKAGTGKTRLTVVFLQSYLKRFPNSHPMVIAPATLMRTWEDEVRKWNVNIPFYNMNSLQLSGYEDAEAVSRLEGNRHHNSIRMVKLVSWWKQKSILGISYPLYEKLAANKNTEGMQVFRRMLVELPGLLVLDEGHTPRNQSSLIWKVLTEVRTEKRIFLSGTLFQNNFKELSNVLCLARPADKDTISSRIHELSKCSQEGEHGRVNEENRIVDLKAMIAHFVHVHEGTILQESLPGLRDCVVVLNPPFQQKKILDRIDTSQNTFEFEHKLSAVSVHPSLYLCCNPTKKEDLVIGPATLGTLKRLRLKYEEGVKTKFLIDFIRISGTVKEKVLVYSQYIDTLKLIMEQLIAECDWTEGEQILLMHGKVEQRDRQHMIDNFNKPDSGSKVLLASTKACSEGISLVGASRVVILDVVWNPSVESQAISRAFRIGQKRAVFIYHLMVKDTSEWNKYCKQSEKHRISELVFSSTNEKDKPINNEVVSKDRILDEMVRHEKLKHIFEKILYHPKKSDMNTSFF.

Disordered regions lie at residues 24-104 (NKSK…SKSF), 224-331 (LRGE…HHKK), 376-396 (DPVVRESSSEKVNEHGKPRER), and 525-544 (PSVNDNKKCSDRKGDPLPNR). The short motif at 47-54 (KRRVNMRD) is the Nuclear localization signal element. Basic and acidic residues predominate over residues 81–90 (EYPEGKRDDE). Positions 92–103 (VGSTSGNLQSKS) are enriched in polar residues. The span at 233–242 (SDEVVSLSSS) shows a compositional bias: low complexity. The segment covering 243 to 254 (SDDEEDPLEELG) has biased composition (acidic residues). The span at 255-269 (TDSREEVSGEDRDSG) shows a compositional bias: basic and acidic residues. Composition is skewed to acidic residues over residues 270–282 (ESDMDEDANDSDS) and 291–309 (DSSDVESSDSDFVCSEDEE). Composition is skewed to basic and acidic residues over residues 310-326 (GGTRDDATCEKNPSEKV), 376-392 (DPVVRESSSEKVNEHGK), and 525-539 (PSVNDNKKCSDRKGD). The Helicase ATP-binding domain occupies 603–796 (SVGVKGSGGC…SNVLCLARPA (194 aa)). Position 616–623 (616–623 (HKAGTGKT)) interacts with ATP. The short motif at 747-750 (DEGH) is the DEAH box element. Residues 934–1087 (DFIRISGTVK…ELVFSSTNEK (154 aa)) form the Helicase C-terminal domain.

It belongs to the SNF2/RAD54 helicase family. In terms of assembly, interacts with NRPD1.

The protein resides in the nucleus. Its function is as follows. Probable chromatin remodeling factor. The chain is SNF2 domain-containing protein CLASSY 4 (CLSY4) from Arabidopsis thaliana (Mouse-ear cress).